A 3003-amino-acid polypeptide reads, in one-letter code: MAX gene-associated protein (3003 aa).

Glycyl lysine isopeptide (Lys-Gly) (interchain with G-Cter in SUMO2) cross-links involve residues K4 and K178. Positions 84 to 260 form a DNA-binding region, T-box; sequence MWNEFHNRST…YNPFAKGFRD (177 aa). The segment covering 259-277 has biased composition (basic and acidic residues); the sequence is RDDGLSSKPQREGKQRNSS. A disordered region spans residues 259–290; the sequence is RDDGLSSKPQREGKQRNSSDQEGNSVSSSPAH. The span at 278–288 shows a compositional bias: polar residues; that stretch reads DQEGNSVSSSP. Glycyl lysine isopeptide (Lys-Gly) (interchain with G-Cter in SUMO2) cross-links involve residues K323, K329, K348, K431, K458, K463, and K480. S531 is subject to Phosphoserine. A disordered region spans residues 553 to 647; sequence ILDNSSTERI…NIPVGPGSTF (95 aa). Residue K567 forms a Glycyl lysine isopeptide (Lys-Gly) (interchain with G-Cter in SUMO2) linkage. Over residues 595–607 the composition is skewed to polar residues; it reads KTVTASHSASPNT. S604 bears the Phosphoserine mark. Residues K610, K651, K782, K788, K814, and K823 each participate in a glycyl lysine isopeptide (Lys-Gly) (interchain with G-Cter in SUMO2) cross-link. Residues 610–621 show a composition bias toward basic residues; sequence KRGRPRKLRLSK. The residue at position 848 (S848) is a Phosphoserine. The segment covering 871 to 913 has biased composition (polar residues); that stretch reads KQSTISPSTSHSVKPQSVTTASRKTKAQNKQTTLSGRTKSSYK. Disordered regions lie at residues 871-946 and 967-987; these read KQST…TSDN and LRQAQQQHLQQQGTRPPGLSK. Phosphoserine is present on S921. A Glycyl lysine isopeptide (Lys-Gly) (interchain with G-Cter in SUMO2) cross-link involves residue K925. Residues 937-946 are compositionally biased toward polar residues; it reads KNSLSSTSDN. Low complexity predominate over residues 969–978; the sequence is QAQQQHLQQQ. Glycyl lysine isopeptide (Lys-Gly) (interchain with G-Cter in SUMO2) cross-links involve residues K987 and K1088. A disordered region spans residues 1111-1130; that stretch reads LGEEGREGGGVREDEEQLKE. The segment covering 1113 to 1122 has biased composition (basic and acidic residues); sequence EEGREGGGVR. Residues K1136, K1158, K1194, and K1202 each participate in a glycyl lysine isopeptide (Lys-Gly) (interchain with G-Cter in SUMO2) cross-link. Disordered stretches follow at residues 1186–1215, 1246–1277, 1297–1323, and 1376–1424; these read QPDLSSTTKGKLTPGIKPARTYTPKPNPVI, QRQLSPPLSPSSSFQQQSSCYSSPENRVTKEL, SQEKSWKSSCNEGESSSTSYVHQRSPG, and RGEK…DISP. Low complexity-rich tracts occupy residues 1248–1269 and 1303–1315; these read QLSPPLSPSSSFQQQSSCYSSP and KSSCNEGESSSTS. Phosphoserine occurs at positions 1423 and 1450. Residues K1454 and K1495 each participate in a glycyl lysine isopeptide (Lys-Gly) (interchain with G-Cter in SUMO2) cross-link. Disordered regions lie at residues 1476–1508, 1722–1746, 1856–1885, 1920–1954, 1964–1983, and 1988–2038; these read AKVAASRKPRTLLPSTSNSKMASSGPATNRSGK, PPVSQRPENAPQIPVTTPQISSNNV, ISPPETQNLASKTGSESKITPSTGGQPVGT, IKKESQSTDQKDETNSIKREEETKKALPSKDKALD, SGIIASENTSNNSLDDGGDL, and TLRE…AGSK. 3 stretches are compositionally biased toward polar residues: residues 1488–1507, 1735–1746, and 1859–1880; these read LPSTSNSKMASSGPATNRSG, PVTTPQISSNNV, and PETQNLASKTGSESKITPSTGG. Residues K1937 and K1944 each participate in a glycyl lysine isopeptide (Lys-Gly) (interchain with G-Cter in SUMO2) cross-link. Over residues 1964-1976 the composition is skewed to polar residues; sequence SGIIASENTSNNS. Glycyl lysine isopeptide (Lys-Gly) (interchain with G-Cter in SUMO2) cross-links involve residues K2060 and K2084. Residues 2087–2110 form a disordered region; the sequence is LSGNQVKEQQSNSQAEAKKDCEDS. Polar residues predominate over residues 2088 to 2101; the sequence is SGNQVKEQQSNSQA. Residues K2104, K2152, and K2179 each participate in a glycyl lysine isopeptide (Lys-Gly) (interchain with G-Cter in SUMO2) cross-link. At R2206 the chain carries Omega-N-methylarginine. Positions 2207 to 2255 are disordered; that stretch reads GSRHFQGHLLLPREQMKPKQQTKDGRSSAADFTVLDLEDEDEEDEKTDD. The span at 2220 to 2232 shows a compositional bias: basic and acidic residues; it reads EQMKPKQQTKDGR. K2225 participates in a covalent cross-link: Glycyl lysine isopeptide (Lys-Gly) (interchain with G-Cter in SUMO2). A compositionally biased stretch (acidic residues) spans 2242 to 2255; it reads DLEDEDEEDEKTDD. Glycyl lysine isopeptide (Lys-Gly) (interchain with G-Cter in SUMO2) cross-links involve residues K2317, K2352, K2396, and K2471. In terms of domain architecture, bHLH spans 2362-2413; it reads YYRRTHTANERRRRGEMRDLFEKLKITLGLLHSSKVSKSLILNRAFSEIQGL. S2480 is subject to Phosphoserine. The disordered stretch occupies residues 2515-2534; sequence KRDQATENASPSDTPHSSAN. Over residues 2520-2534 the composition is skewed to polar residues; that stretch reads TENASPSDTPHSSAN. Residues K2568 and K2618 each participate in a glycyl lysine isopeptide (Lys-Gly) (interchain with G-Cter in SUMO2) cross-link. Residues 2629-2651 show a composition bias toward basic and acidic residues; it reads SEASSLKDTERISSRGNHRDSRK. Residues 2629–2654 form a disordered region; sequence SEASSLKDTERISSRGNHRDSRKALG. A Glycyl lysine isopeptide (Lys-Gly) (interchain with G-Cter in SUMO2) cross-link involves residue K2724. S2849 and S2860 each carry phosphoserine. Residues 2877–2917 form a disordered region; it reads LVSHRKSSDGGQSTSGLPAEPESVSSPPILHMKTGPENSNT. Residue K2979 forms a Glycyl lysine isopeptide (Lys-Gly) (interchain with G-Cter in SUMO2) linkage.

In terms of assembly, component of some MLL1/MLL complex, at least composed of the core components KMT2A/MLL1, ASH2L, HCFC1/HCF1, WDR5 and RBBP5, as well as the facultative components BACC1, CHD8, E2F6, HSP70, INO80C, KANSL1, LAS1L, MAX, MCRS1, MGA, MYST1/MOF, PELP1, PHF20, PRP31, RING2, RUVB1/TIP49A, RUVB2/TIP49B, SENP3, TAF1, TAF4, TAF6, TAF7, TAF9 and TEX10. Interacts with ZMYND11. Interacts with MAX. Requires heterodimerization with MAX for E-box binding. Highly expressed in germ cells and granulosa cells.

The protein localises to the nucleus. Functions as a dual-specificity transcription factor, regulating the expression of both MAX-network and T-box family target genes. Functions as a repressor or an activator. Binds to 5'-AATTTCACACCTAGGTGTGAAATT-3' core sequence and seems to regulate MYC-MAX target genes. Suppresses transcriptional activation by MYC and inhibits MYC-dependent cell transformation. Function activated by heterodimerization with MAX. This heterodimerization serves the dual function of both generating an E-box-binding heterodimer and simultaneously blocking interaction of a corepressor. The protein is MAX gene-associated protein of Mus musculus (Mouse).